The primary structure comprises 549 residues: Probable protein kinase UbiB (549 aa).

One can recognise a Protein kinase domain in the interval 123–501 (DFDETPLASA…QQQAHKSNYM (379 aa)). Residues 129–137 (LASASISQV) and Lys152 each bind ATP. Asp287 serves as the catalytic Proton acceptor. 2 consecutive transmembrane segments (helical) span residues 499 to 516 (NYML…TLLF) and 521 to 540 (TLWS…FIGW).

Belongs to the ABC1 family. UbiB subfamily.

The protein localises to the cell inner membrane. Its pathway is cofactor biosynthesis; ubiquinone biosynthesis [regulation]. Is probably a protein kinase regulator of UbiI activity which is involved in aerobic coenzyme Q (ubiquinone) biosynthesis. The chain is Probable protein kinase UbiB from Shewanella sp. (strain W3-18-1).